The primary structure comprises 422 residues: Exodeoxyribonuclease 7 large subunit (422 aa).

It belongs to the XseA family. Heterooligomer composed of large and small subunits.

Its subcellular location is the cytoplasm. The catalysed reaction is Exonucleolytic cleavage in either 5'- to 3'- or 3'- to 5'-direction to yield nucleoside 5'-phosphates.. Functionally, bidirectionally degrades single-stranded DNA into large acid-insoluble oligonucleotides, which are then degraded further into small acid-soluble oligonucleotides. This Leptospira interrogans serogroup Icterohaemorrhagiae serovar copenhageni (strain Fiocruz L1-130) protein is Exodeoxyribonuclease 7 large subunit.